The following is a 205-amino-acid chain: Small ribosomal subunit protein uS4 (205 aa).

The segment at 1–49 (MSKRQSAKYKLDRRMGENIWGRPKSPVNRREYGPGQHGQRRKGKLSDFG) is disordered. The S4 RNA-binding domain occupies 94–157 (SRLDAIVFRA…KQLTVVLESV (64 aa)).

Belongs to the universal ribosomal protein uS4 family. Part of the 30S ribosomal subunit. Contacts protein S5. The interaction surface between S4 and S5 is involved in control of translational fidelity.

In terms of biological role, one of the primary rRNA binding proteins, it binds directly to 16S rRNA where it nucleates assembly of the body of the 30S subunit. Its function is as follows. With S5 and S12 plays an important role in translational accuracy. In Chelativorans sp. (strain BNC1), this protein is Small ribosomal subunit protein uS4.